A 549-amino-acid chain; its full sequence is Endoplasmic reticulum mannosyl-oligosaccharide 1,2-alpha-mannosidase (549 aa).

The Cytoplasmic portion of the chain corresponds to 1-4; the sequence is MKNS. A helical; Signal-anchor for type II membrane protein transmembrane segment spans residues 5-24; the sequence is VGISIATIVAIIAAIYYVPW. Residues 25–354 lie on the Lumenal side of the membrane; that stretch reads YEHFERKSPG…LLASGSTEGL (330 aa). 3 N-linked (GlcNAc...) asparagine glycosylation sites follow: N96, N155, and N224. A disulfide bridge links C340 with C385. The active-site Proton donor is E399. Cysteines 468 and 471 form a disulfide. T525 contacts Ca(2+).

This sequence belongs to the glycosyl hydrolase 47 family. As to quaternary structure, homodimer. It depends on Ca(2+) as a cofactor.

It is found in the endoplasmic reticulum membrane. The catalysed reaction is N(4)-(alpha-D-Man-(1-&gt;2)-alpha-D-Man-(1-&gt;2)-alpha-D-Man-(1-&gt;3)-[alpha-D-Man-(1-&gt;2)-alpha-D-Man-(1-&gt;3)-[alpha-D-Man-(1-&gt;2)-alpha-D-Man-(1-&gt;6)]-alpha-D-Man-(1-&gt;6)]-beta-D-Man-(1-&gt;4)-beta-D-GlcNAc-(1-&gt;4)-beta-D-GlcNAc)-L-asparaginyl-[protein] (N-glucan mannose isomer 9A1,2,3B1,2,3) + 4 H2O = N(4)-(alpha-D-Man-(1-&gt;3)-[alpha-D-Man-(1-&gt;3)-[alpha-D-Man-(1-&gt;6)]-alpha-D-Man-(1-&gt;6)]-beta-D-Man-(1-&gt;4)-beta-D-GlcNAc-(1-&gt;4)-beta-D-GlcNAc)-L-asparaginyl-[protein] (N-glucan mannose isomer 5A1,2) + 4 beta-D-mannose. It catalyses the reaction N(4)-(alpha-D-Man-(1-&gt;2)-alpha-D-Man-(1-&gt;2)-alpha-D-Man-(1-&gt;3)-[alpha-D-Man-(1-&gt;3)-[alpha-D-Man-(1-&gt;2)-alpha-D-Man-(1-&gt;6)]-alpha-D-Man-(1-&gt;6)]-beta-D-Man-(1-&gt;4)-beta-D-GlcNAc-(1-&gt;4)-beta-D-GlcNAc)-L-asparaginyl-[protein] (N-glucan mannose isomer 8A1,2,3B1,3) + 3 H2O = N(4)-(alpha-D-Man-(1-&gt;3)-[alpha-D-Man-(1-&gt;3)-[alpha-D-Man-(1-&gt;6)]-alpha-D-Man-(1-&gt;6)]-beta-D-Man-(1-&gt;4)-beta-D-GlcNAc-(1-&gt;4)-beta-D-GlcNAc)-L-asparaginyl-[protein] (N-glucan mannose isomer 5A1,2) + 3 beta-D-mannose. It functions in the pathway protein modification; protein glycosylation. Functionally, involved in glycoprotein quality control as it is important for the targeting of misfolded glycoproteins for degradation. It primarily trims a single alpha-1,2-linked mannose residue from Man(9)GlcNAc(2) to produce Man(8)GlcNAc(2), but at high enzyme concentrations it further trims the carbohydrates to Man(5)GlcNAc(2). This Saccharomyces cerevisiae (strain ATCC 204508 / S288c) (Baker's yeast) protein is Endoplasmic reticulum mannosyl-oligosaccharide 1,2-alpha-mannosidase (MNS1).